The primary structure comprises 223 residues: UPF0441 protein ETA_04310 (223 aa).

Residues 166-223 are disordered; sequence YGAATPGRTMTVPKSALAPKPATTSTVTRGGFGESVAKQNTMQRNSSSTGSANRSMGG. A compositionally biased stretch (polar residues) spans 202-223; it reads AKQNTMQRNSSSTGSANRSMGG.

Belongs to the UPF0441 family.

The sequence is that of UPF0441 protein ETA_04310 from Erwinia tasmaniensis (strain DSM 17950 / CFBP 7177 / CIP 109463 / NCPPB 4357 / Et1/99).